A 144-amino-acid polypeptide reads, in one-letter code: D-aminoacyl-tRNA deacylase (144 aa).

The Gly-cisPro motif, important for rejection of L-amino acids signature appears at glycine 136–proline 137.

This sequence belongs to the DTD family. As to quaternary structure, homodimer.

Its subcellular location is the cytoplasm. The catalysed reaction is glycyl-tRNA(Ala) + H2O = tRNA(Ala) + glycine + H(+). The enzyme catalyses a D-aminoacyl-tRNA + H2O = a tRNA + a D-alpha-amino acid + H(+). In terms of biological role, an aminoacyl-tRNA editing enzyme that deacylates mischarged D-aminoacyl-tRNAs. Also deacylates mischarged glycyl-tRNA(Ala), protecting cells against glycine mischarging by AlaRS. Acts via tRNA-based rather than protein-based catalysis; rejects L-amino acids rather than detecting D-amino acids in the active site. By recycling D-aminoacyl-tRNA to D-amino acids and free tRNA molecules, this enzyme counteracts the toxicity associated with the formation of D-aminoacyl-tRNA entities in vivo and helps enforce protein L-homochirality. This is D-aminoacyl-tRNA deacylase from Corynebacterium efficiens (strain DSM 44549 / YS-314 / AJ 12310 / JCM 11189 / NBRC 100395).